The chain runs to 122 residues: Small ribosomal subunit protein uS13 (122 aa).

Positions 95–122 (GLPVRGQRTHTNARTRKGPAKSIAGKKK) are disordered.

It belongs to the universal ribosomal protein uS13 family. Part of the 30S ribosomal subunit. Forms a loose heterodimer with protein S19. Forms two bridges to the 50S subunit in the 70S ribosome.

Located at the top of the head of the 30S subunit, it contacts several helices of the 16S rRNA. In the 70S ribosome it contacts the 23S rRNA (bridge B1a) and protein L5 of the 50S subunit (bridge B1b), connecting the 2 subunits; these bridges are implicated in subunit movement. Contacts the tRNAs in the A and P-sites. This Nitrobacter hamburgensis (strain DSM 10229 / NCIMB 13809 / X14) protein is Small ribosomal subunit protein uS13.